The following is a 70-amino-acid chain: Kappa-scoloptoxin(07)-Ssm2b (70 aa).

The first 19 residues, 1–19, serve as a signal peptide directing secretion; that stretch reads MLVFYALLFVSVFSSTVMG. The propeptide occupies 20 to 39; sequence ATIDKPILREAIEEIDVNKR.

The protein belongs to the scoloptoxin-07 family. Contains 3 disulfide bonds. Expressed by the venom gland.

The protein resides in the secreted. Its function is as follows. Inhibits voltage-gated potassium channels. In Scolopendra mutilans (Chinese red-headed centipede), this protein is Kappa-scoloptoxin(07)-Ssm2b.